A 113-amino-acid chain; its full sequence is UPF0342 protein MGAS10750_Spy0713 (113 aa).

This sequence belongs to the UPF0342 family.

This Streptococcus pyogenes serotype M4 (strain MGAS10750) protein is UPF0342 protein MGAS10750_Spy0713.